The chain runs to 451 residues: ATP-dependent protease ATPase subunit HslU (451 aa).

ATP contacts are provided by residues Ile26, 68–73 (GVGKTE), Asp263, Glu328, and Arg400.

This sequence belongs to the ClpX chaperone family. HslU subfamily. As to quaternary structure, a double ring-shaped homohexamer of HslV is capped on each side by a ring-shaped HslU homohexamer. The assembly of the HslU/HslV complex is dependent on binding of ATP.

It is found in the cytoplasm. In terms of biological role, ATPase subunit of a proteasome-like degradation complex; this subunit has chaperone activity. The binding of ATP and its subsequent hydrolysis by HslU are essential for unfolding of protein substrates subsequently hydrolyzed by HslV. HslU recognizes the N-terminal part of its protein substrates and unfolds these before they are guided to HslV for hydrolysis. This Dichelobacter nodosus (strain VCS1703A) protein is ATP-dependent protease ATPase subunit HslU.